Here is a 349-residue protein sequence, read N- to C-terminus: GDP-mannose:glycolipid 4-beta-D-mannosyltransferase (349 aa).

The N-terminal stretch at 1–14 is a signal peptide; sequence MSASASLPVTRAAA.

It belongs to the glycosyltransferase 94 family.

It is found in the cell inner membrane. The catalysed reaction is beta-D-GlcA-(1-&gt;2)-alpha-D-Man-(1-&gt;3)-beta-D-Glc-(1-&gt;4)-alpha-D-Glc-di-trans,octa-cis-undecaprenyl diphosphate + GDP-alpha-D-mannose = beta-D-Man-(1-&gt;4)-beta-D-GlcA-(1-&gt;2)-alpha-D-Man-(1-&gt;3)-beta-D-Glc-(1-&gt;4)-alpha-D-Glc-di-trans,octa-cis-undecaprenyl diphosphate + GDP + H(+). It functions in the pathway glycan biosynthesis; xanthan biosynthesis. Nonprocessive beta-mannosyltransferase that catalyzes the transfer of a mannose residue from GDP-mannose to glucuronic acid-beta-1,2-mannose-alpha-1,3-glucose-beta-1,4-glucose-PP-polyisoprenyl to form the lipid-linked pentasaccharide repeating unit of xanthan, Man-GlcA-Man-Glc(2)-PP-Pol. Is involved in the biosynthesis of the exopolysaccharide xanthan. This chain is GDP-mannose:glycolipid 4-beta-D-mannosyltransferase (gumI), found in Xanthomonas campestris pv. campestris (strain ATCC 33913 / DSM 3586 / NCPPB 528 / LMG 568 / P 25).